The sequence spans 133 residues: Ribosome-binding factor A (133 aa).

Belongs to the RbfA family. Monomer. Binds 30S ribosomal subunits, but not 50S ribosomal subunits or 70S ribosomes.

Its subcellular location is the cytoplasm. One of several proteins that assist in the late maturation steps of the functional core of the 30S ribosomal subunit. Associates with free 30S ribosomal subunits (but not with 30S subunits that are part of 70S ribosomes or polysomes). Required for efficient processing of 16S rRNA. May interact with the 5'-terminal helix region of 16S rRNA. This Citrobacter koseri (strain ATCC BAA-895 / CDC 4225-83 / SGSC4696) protein is Ribosome-binding factor A.